The chain runs to 240 residues: Small ribosomal subunit protein uS3 (240 aa).

The KH type-2 domain occupies 39–108 (LRKFLKKKLY…ELILNIKEER (70 aa)). Over residues 213–224 (MNSDDTATPERK) the composition is skewed to basic and acidic residues. A disordered region spans residues 213–240 (MNSDDTATPERKAPRRRKGRRNVNAKKN). Basic residues predominate over residues 225 to 240 (APRRRKGRRNVNAKKN).

It belongs to the universal ribosomal protein uS3 family. In terms of assembly, part of the 30S ribosomal subunit. Forms a tight complex with proteins S10 and S14.

Functionally, binds the lower part of the 30S subunit head. Binds mRNA in the 70S ribosome, positioning it for translation. The chain is Small ribosomal subunit protein uS3 from Nautilia profundicola (strain ATCC BAA-1463 / DSM 18972 / AmH).